We begin with the raw amino-acid sequence, 286 residues long: MPNTMQALNTQPLNDTLITKSITAADYVPTLDAMLSRTLARIALKKEQGLRTPDELWIVDHNDVYTLGQAGKEEHILQRTNTPIIKTDRGGQVTWHGHGQLVMYWLFDLDSVGWSVRNMVSHAEQAIEDVVNDCLKSPASTDTIHISARARRDAPGVYIYADTAAEIDSAHRSTDEIKVDNTIMIGKIASLGFKIKHGFSYHGVAINLNCDLSAFNAINPCGYAGMQMLRLADFVNMNQATTPQPNNPTLTDDAKTITYEQFTQKLIDNIAQRHAGVIPLRELAPK.

A BPL/LPL catalytic domain is found at 50–278 (LRTPDELWIV…NIAQRHAGVI (229 aa)). Substrate is bound by residues 89–96 (RGGQVTWH), 190–192 (SLG), and 203–205 (GVA). Residue C221 is the Acyl-thioester intermediate of the active site.

Belongs to the LipB family.

The protein localises to the cytoplasm. It carries out the reaction octanoyl-[ACP] + L-lysyl-[protein] = N(6)-octanoyl-L-lysyl-[protein] + holo-[ACP] + H(+). Its pathway is protein modification; protein lipoylation via endogenous pathway; protein N(6)-(lipoyl)lysine from octanoyl-[acyl-carrier-protein]: step 1/2. Functionally, catalyzes the transfer of endogenously produced octanoic acid from octanoyl-acyl-carrier-protein onto the lipoyl domains of lipoate-dependent enzymes. Lipoyl-ACP can also act as a substrate although octanoyl-ACP is likely to be the physiological substrate. The sequence is that of Octanoyltransferase from Psychrobacter arcticus (strain DSM 17307 / VKM B-2377 / 273-4).